The sequence spans 89 residues: Mitochondrial import inner membrane translocase subunit Tim9 (89 aa).

Alanine 2 carries the post-translational modification N-acetylalanine. Positions 28–52 (CFLDCVKDFTTREVKPEEVTCSEHC) match the Twin CX3C motif motif. 2 disulfide bridges follow: cysteine 28/cysteine 52 and cysteine 32/cysteine 48.

Belongs to the small Tim family. Heterohexamer; composed of 3 copies of TIMM9 and 3 copies of TIMM10/TIM10A, named soluble 70 kDa complex. The complex forms a 6-bladed alpha-propeller structure and associates with the TIMM22 component of the TIM22 complex. Interacts with multi-pass transmembrane proteins in transit. Also forms a complex composed of TIMM9, TIMM10/TIM10A and FXC1/TIM10B.

Its subcellular location is the mitochondrion inner membrane. Functionally, mitochondrial intermembrane chaperone that participates in the import and insertion of multi-pass transmembrane proteins into the mitochondrial inner membrane. May also be required for the transfer of beta-barrel precursors from the TOM complex to the sorting and assembly machinery (SAM complex) of the outer membrane. Acts as a chaperone-like protein that protects the hydrophobic precursors from aggregation and guide them through the mitochondrial intermembrane space. This chain is Mitochondrial import inner membrane translocase subunit Tim9 (Timm9), found in Rattus norvegicus (Rat).